Consider the following 190-residue polypeptide: ATP synthase subunit b 1 (190 aa).

The chain crosses the membrane as a helical span at residues 35-55 (DFVVLLGFLLFLAILFYFGVP).

The protein belongs to the ATPase B chain family. As to quaternary structure, F-type ATPases have 2 components, F(1) - the catalytic core - and F(0) - the membrane proton channel. F(1) has five subunits: alpha(3), beta(3), gamma(1), delta(1), epsilon(1). F(0) has three main subunits: a(1), b(2) and c(10-14). The alpha and beta chains form an alternating ring which encloses part of the gamma chain. F(1) is attached to F(0) by a central stalk formed by the gamma and epsilon chains, while a peripheral stalk is formed by the delta and b chains.

It is found in the cell inner membrane. Functionally, f(1)F(0) ATP synthase produces ATP from ADP in the presence of a proton or sodium gradient. F-type ATPases consist of two structural domains, F(1) containing the extramembraneous catalytic core and F(0) containing the membrane proton channel, linked together by a central stalk and a peripheral stalk. During catalysis, ATP synthesis in the catalytic domain of F(1) is coupled via a rotary mechanism of the central stalk subunits to proton translocation. Component of the F(0) channel, it forms part of the peripheral stalk, linking F(1) to F(0). This Jannaschia sp. (strain CCS1) protein is ATP synthase subunit b 1.